Reading from the N-terminus, the 285-residue chain is Tropomyosin (285 aa).

Residues 1-273 (MDAIKKKMQA…KEKYREIGDD (273 aa)) are a coiled coil.

The protein belongs to the tropomyosin family. Homodimer.

Its function is as follows. Tropomyosin, in association with the troponin complex, plays a central role in the calcium dependent regulation of muscle contraction. The polypeptide is Tropomyosin (Chironomus kiiensis (Midge)).